Here is a 325-residue protein sequence, read N- to C-terminus: Phosphate acyltransferase (325 aa).

This sequence belongs to the PlsX family. As to quaternary structure, homodimer. Probably interacts with PlsY.

It is found in the cytoplasm. It carries out the reaction a fatty acyl-[ACP] + phosphate = an acyl phosphate + holo-[ACP]. It participates in lipid metabolism; phospholipid metabolism. Catalyzes the reversible formation of acyl-phosphate (acyl-PO(4)) from acyl-[acyl-carrier-protein] (acyl-ACP). This enzyme utilizes acyl-ACP as fatty acyl donor, but not acyl-CoA. The polypeptide is Phosphate acyltransferase (Staphylococcus epidermidis (strain ATCC 12228 / FDA PCI 1200)).